The sequence spans 122 residues: Large ribosomal subunit protein uL14c (122 aa).

Belongs to the universal ribosomal protein uL14 family. Part of the 50S ribosomal subunit.

The protein resides in the plastid. It localises to the chloroplast. Binds to 23S rRNA. The sequence is that of Large ribosomal subunit protein uL14c from Carica papaya (Papaya).